Reading from the N-terminus, the 188-residue chain is Peptidyl-tRNA hydrolase (188 aa).

Residue tyrosine 14 coordinates tRNA. The Proton acceptor role is filled by histidine 19. 3 residues coordinate tRNA: tyrosine 64, asparagine 66, and asparagine 112.

Belongs to the PTH family. As to quaternary structure, monomer.

It localises to the cytoplasm. It carries out the reaction an N-acyl-L-alpha-aminoacyl-tRNA + H2O = an N-acyl-L-amino acid + a tRNA + H(+). Its function is as follows. Hydrolyzes ribosome-free peptidyl-tRNAs (with 1 or more amino acids incorporated), which drop off the ribosome during protein synthesis, or as a result of ribosome stalling. Catalyzes the release of premature peptidyl moieties from peptidyl-tRNA molecules trapped in stalled 50S ribosomal subunits, and thus maintains levels of free tRNAs and 50S ribosomes. This Bacillus velezensis (strain DSM 23117 / BGSC 10A6 / LMG 26770 / FZB42) (Bacillus amyloliquefaciens subsp. plantarum) protein is Peptidyl-tRNA hydrolase.